Reading from the N-terminus, the 359-residue chain is Protein RecA (359 aa).

ATP is bound at residue 74–81 (GPESSGKT).

It belongs to the RecA family.

It localises to the cytoplasm. Functionally, can catalyze the hydrolysis of ATP in the presence of single-stranded DNA, the ATP-dependent uptake of single-stranded DNA by duplex DNA, and the ATP-dependent hybridization of homologous single-stranded DNAs. It interacts with LexA causing its activation and leading to its autocatalytic cleavage. This is Protein RecA from Anaplasma marginale (strain Florida).